Reading from the N-terminus, the 321-residue chain is o-succinylbenzoate synthase (321 aa).

K134 acts as the Proton donor in catalysis. Mg(2+) is bound by residues D162, E191, and D214. Catalysis depends on K236, which acts as the Proton acceptor.

This sequence belongs to the mandelate racemase/muconate lactonizing enzyme family. MenC type 1 subfamily. Requires a divalent metal cation as cofactor.

It carries out the reaction (1R,6R)-6-hydroxy-2-succinyl-cyclohexa-2,4-diene-1-carboxylate = 2-succinylbenzoate + H2O. The protein operates within quinol/quinone metabolism; 1,4-dihydroxy-2-naphthoate biosynthesis; 1,4-dihydroxy-2-naphthoate from chorismate: step 4/7. Its pathway is quinol/quinone metabolism; menaquinone biosynthesis. Converts 2-succinyl-6-hydroxy-2,4-cyclohexadiene-1-carboxylate (SHCHC) to 2-succinylbenzoate (OSB). The polypeptide is o-succinylbenzoate synthase (Klebsiella pneumoniae (strain 342)).